A 614-amino-acid polypeptide reads, in one-letter code: uncharacterized protein (614 aa).

This is an uncharacterized protein from Lactococcus lactis subsp. cremoris (strain MG1363).